The primary structure comprises 304 residues: Voltage-dependent anion channel-forming protein YneE (304 aa).

4 helical membrane-spanning segments follow: residues 28 to 48 (LLLN…YTML), 50 to 70 (IKFT…FLGF), 209 to 229 (AYTL…PFAL), and 235 to 255 (YMTP…DALA).

This sequence belongs to the anion channel-forming bestrophin (TC 1.A.46) family.

The protein resides in the cell membrane. The chain is Voltage-dependent anion channel-forming protein YneE (yneE) from Salmonella typhi.